The chain runs to 267 residues: D-aminoacyl-tRNA deacylase (267 aa).

The protein belongs to the DtdA deacylase family. In terms of assembly, monomer. Requires Zn(2+) as cofactor.

It carries out the reaction a D-aminoacyl-tRNA + H2O = a tRNA + a D-alpha-amino acid + H(+). The enzyme catalyses glycyl-tRNA(Ala) + H2O = tRNA(Ala) + glycine + H(+). In terms of biological role, D-aminoacyl-tRNA deacylase with broad substrate specificity. By recycling D-aminoacyl-tRNA to D-amino acids and free tRNA molecules, this enzyme counteracts the toxicity associated with the formation of D-aminoacyl-tRNA entities in vivo. In Methanothrix thermoacetophila (strain DSM 6194 / JCM 14653 / NBRC 101360 / PT) (Methanosaeta thermophila), this protein is D-aminoacyl-tRNA deacylase.